Here is a 319-residue protein sequence, read N- to C-terminus: tRNA U34 carboxymethyltransferase (319 aa).

Carboxy-S-adenosyl-L-methionine contacts are provided by residues lysine 88, tryptophan 102, lysine 107, glycine 126, leucine 176–glutamate 177, methionine 192, tyrosine 196, and arginine 311.

It belongs to the class I-like SAM-binding methyltransferase superfamily. CmoB family. As to quaternary structure, homotetramer.

The enzyme catalyses carboxy-S-adenosyl-L-methionine + 5-hydroxyuridine(34) in tRNA = 5-carboxymethoxyuridine(34) in tRNA + S-adenosyl-L-homocysteine + H(+). Its function is as follows. Catalyzes carboxymethyl transfer from carboxy-S-adenosyl-L-methionine (Cx-SAM) to 5-hydroxyuridine (ho5U) to form 5-carboxymethoxyuridine (cmo5U) at position 34 in tRNAs. The polypeptide is tRNA U34 carboxymethyltransferase (Pseudomonas syringae pv. tomato (strain ATCC BAA-871 / DC3000)).